The sequence spans 131 residues: Insulin-like 3 (131 aa).

The N-terminal stretch at 1 to 24 (MDPRLPAWALVLLGPALVFALGPA) is a signal peptide. Disulfide bonds link cysteine 34–cysteine 117, cysteine 46–cysteine 130, and cysteine 116–cysteine 121. The propeptide at 58 to 104 (PVAAGDGELLQWLERRHLLYGLVANSEPAPGGPGLQPMPQTSHHHRH) is c peptide like. The tract at residues 86 to 105 (APGGPGLQPMPQTSHHHRHR) is disordered.

The protein belongs to the insulin family. In terms of assembly, heterodimer of a B chain and an A chain linked by two disulfide bonds. Highest expression in the Leydig cells of the testis.

The protein resides in the secreted. Functionally, seems to play a role in testicular function. May be a trophic hormone with a role in testicular descent in fetal life. Is a ligand for LGR8 receptor. This Callithrix jacchus (White-tufted-ear marmoset) protein is Insulin-like 3 (INSL3).